We begin with the raw amino-acid sequence, 378 residues long: 1-acyl-sn-glycerol-3-phosphate acyltransferase delta (378 aa).

The helical transmembrane segment at 11–31 threads the bilayer; that stretch reads FLCHLVFCYVFIASGLIINTV. An HXXXXD motif motif is present at residues 96-101; it reads HKFEID. The next 3 membrane-spanning stretches (helical) occupy residues 125–145, 307–327, and 338–358; these read ELAY…VFCS, TLVN…QFLV, and LASF…MIGV.

Belongs to the 1-acyl-sn-glycerol-3-phosphate acyltransferase family.

The protein localises to the endoplasmic reticulum membrane. It catalyses the reaction a 1-acyl-sn-glycero-3-phosphate + an acyl-CoA = a 1,2-diacyl-sn-glycero-3-phosphate + CoA. The enzyme catalyses (4Z,7Z,10Z,13Z,16Z,19Z)-docosahexaenoyl-CoA + 1-hexadecanoyl-sn-glycero-3-phosphate = 1-hexadecanoyl-2-(4Z,7Z,10Z,13Z,16Z,19Z-docosahexaenoyl)-sn-glycero-3-phosphate + CoA. The catalysed reaction is 1-octadecanoyl-sn-glycero-3-phosphate + (9Z,12Z)-octadecadienoyl-CoA = 1-octadecanoyl-2-(9Z,12Z-octadecadienoyl)-sn-glycero-3-phosphate + CoA. It carries out the reaction 1-octadecanoyl-sn-glycero-3-phosphate + (4Z,7Z,10Z,13Z,16Z,19Z)-docosahexaenoyl-CoA = 1-octadecanoyl-2-(4Z,7Z,10Z,13Z,16Z,19Z-docosahexaenoyl)-sn-glycero-3-phosphate + CoA. It catalyses the reaction (4Z,7Z,10Z,13Z,16Z,19Z)-docosahexaenoyl-CoA + 1-(9Z-octadecenoyl)-sn-glycero-3-phosphate = 1-(9Z-octadecenoyl)-2-(4Z,7Z,10Z,13Z,16Z,19Z-docosahexaenoyl)-sn-glycero-3-phosphate + CoA. It functions in the pathway phospholipid metabolism; CDP-diacylglycerol biosynthesis; CDP-diacylglycerol from sn-glycerol 3-phosphate: step 2/3. In terms of biological role, converts 1-acyl-sn-glycerol-3-phosphate (lysophosphatidic acid or LPA) into 1,2-diacyl-sn-glycerol-3-phosphate (phosphatidic acid or PA) by incorporating an acyl moiety at the sn-2 position of the glycerol backbone. Exhibits high acyl-CoA specificity for polyunsaturated fatty acyl-CoA, especially docosahexaenoyl-CoA (22:6-CoA, DHA-CoA). This is 1-acyl-sn-glycerol-3-phosphate acyltransferase delta (AGPAT4) from Macaca fascicularis (Crab-eating macaque).